Reading from the N-terminus, the 229-residue chain is PKHD-type hydroxylase Rpal_3968 (229 aa).

Positions 78-180 constitute a Fe2OG dioxygenase domain; it reads QIFPPLFNRY…RVASFFWLQS (103 aa). Histidine 98, aspartate 100, and histidine 161 together coordinate Fe cation. Arginine 171 is a 2-oxoglutarate binding site.

Fe(2+) is required as a cofactor. The cofactor is L-ascorbate.

In Rhodopseudomonas palustris (strain TIE-1), this protein is PKHD-type hydroxylase Rpal_3968.